Reading from the N-terminus, the 757-residue chain is RNA-directed RNA polymerase catalytic subunit (757 aa).

The disordered stretch occupies residues 53 to 82 (GRWTTNTETGAPQLNPIDGPLPEDNEPSGY). Over residues 55–64 (WTTNTETGAP) the composition is skewed to polar residues. Short sequence motifs (nuclear localization signal) lie at residues 187–195 (RKRRVRDNV) and 203–216 (RTIG…NKRS). The segment at 249–256 (RGFVYFVE) is promoter-binding site. Residues 286-483 (VRKMMTNSQD…GINMSKKKSY (198 aa)) form the RdRp catalytic domain.

This sequence belongs to the influenza viruses polymerase PB1 family. As to quaternary structure, influenza RNA polymerase is composed of three subunits: PB1, PB2 and PA. Interacts (via N-terminus) with PA (via C-terminus). Interacts (via C-terminus) with PB2 (via N-terminus); this interaction is essential for transcription initiation. Interacts (via C-terminus) with human PKP2 (via N-terminus); the interaction competitively inhibits the interaction between the RNA polymerase subunits PB1 and PB2. In terms of processing, phosphorylated by host PRKCA.

It localises to the host nucleus. The protein localises to the host cytoplasm. It carries out the reaction RNA(n) + a ribonucleoside 5'-triphosphate = RNA(n+1) + diphosphate. Functionally, RNA-dependent RNA polymerase which is responsible for replication and transcription of virus RNA segments. The transcription of viral mRNAs occurs by a unique mechanism called cap-snatching. 5' methylated caps of cellular mRNAs are cleaved after 10-13 nucleotides by PA. In turn, these short capped RNAs are used as primers by PB1 for transcription of viral mRNAs. During virus replication, PB1 initiates RNA synthesis and copy vRNA into complementary RNA (cRNA) which in turn serves as a template for the production of more vRNAs. The protein is RNA-directed RNA polymerase catalytic subunit of Influenza A virus (strain A/USA:Iowa/1943 H1N1).